A 628-amino-acid chain; its full sequence is Biosynthetic arginine decarboxylase (628 aa).

N6-(pyridoxal phosphate)lysine is present on Lys99. Residue 279 to 289 coordinates substrate; that stretch reads VDVGGGLGIDY.

The protein belongs to the Orn/Lys/Arg decarboxylase class-II family. SpeA subfamily. Requires Mg(2+) as cofactor. It depends on pyridoxal 5'-phosphate as a cofactor.

It carries out the reaction L-arginine + H(+) = agmatine + CO2. It functions in the pathway amine and polyamine biosynthesis; agmatine biosynthesis; agmatine from L-arginine: step 1/1. In terms of biological role, catalyzes the biosynthesis of agmatine from arginine. This chain is Biosynthetic arginine decarboxylase, found in Xylella fastidiosa (strain M23).